The chain runs to 85 residues: Sec-independent protein translocase protein TatA (85 aa).

Residues 1–21 (MGSFSIWHWLIVLLIIMMVFG) traverse the membrane as a helical segment. A compositionally biased stretch (basic and acidic residues) spans 39-51 (FKEGMREGSEDKP). Positions 39–85 (FKEGMREGSEDKPAGSQQGQQAAGQPPRELHDSTTIDVEARDKSKQG) are disordered. Residues 52–65 (AGSQQGQQAAGQPP) show a composition bias toward low complexity. A compositionally biased stretch (basic and acidic residues) spans 66-85 (RELHDSTTIDVEARDKSKQG).

Belongs to the TatA/E family. The Tat system comprises two distinct complexes: a TatABC complex, containing multiple copies of TatA, TatB and TatC subunits, and a separate TatA complex, containing only TatA subunits. Substrates initially bind to the TatABC complex, which probably triggers association of the separate TatA complex to form the active translocon.

It is found in the cell inner membrane. Functionally, part of the twin-arginine translocation (Tat) system that transports large folded proteins containing a characteristic twin-arginine motif in their signal peptide across membranes. TatA could form the protein-conducting channel of the Tat system. In Ralstonia nicotianae (strain ATCC BAA-1114 / GMI1000) (Ralstonia solanacearum), this protein is Sec-independent protein translocase protein TatA.